The following is an 883-amino-acid chain: Ankyrin repeat and SAM domain-containing protein 6 (883 aa).

10 ANK repeats span residues 8–37, 68–97, 101–130, 134–163, 181–210, 215–244, 282–312, 316–345, 350–379, and 383–414; these read PGLQ…DPVA, AGNS…SVNS, YGWS…DVNA, LGAS…IVDH, LGIT…DPNH, VGWS…NPDH, KRRP…HVNL, DGAT…DMDK, HGWT…DVAL, and NGYT…QVNK. The segment at 30–50 is disordered; it reads EPGADPVAGPEAGAEPAGPEA. Disordered stretches follow at residues 414–439, 490–522, 566–773, and 852–883; these read KDRG…IPVL, MRAP…RREK, SHTC…ITDE, and SFES…SSRR. A compositionally biased stretch (basic and acidic residues) spans 566–576; that stretch reads SHTCHNGKADP. The segment covering 607 to 630 has biased composition (low complexity); it reads PSISRSPASPASSGSFNHSPHSSG. The segment covering 631–640 has biased composition (gly residues); it reads GASGIGGMSR. Phosphoserine is present on Ser-649. Over residues 649–661 the composition is skewed to polar residues; the sequence is SGGSVDSVLSQIA. Low complexity-rich tracts occupy residues 687–711 and 720–737; these read SSSP…PSSS and PPSG…TLTP. A phosphoserine mark is found at Ser-732 and Ser-740. Low complexity predominate over residues 748-768; it reads SSVSSSSSHRQSKSSGGSSSG. One can recognise an SAM domain in the interval 771–834; sequence TDEDELTGIL…LAAISELNAG (64 aa). The span at 852-862 shows a compositional bias: polar residues; sequence SFESSASNTRA. Positions 874-883 are enriched in basic and acidic residues; sequence RPEETVSSRR.

In terms of assembly, homooligomer. Interacts with NEK8. Central component of a complex containing at least ANKS6, INVS, NEK8 and NPHP3. ANKS6 may organize complex assembly by linking INVS and NPHP3 to NEK8 and INVS may target the complex to the proximal ciliary axoneme. Interacts (via SAM domain) with BICC1 (via KH domains) in an RNA-dependent manner. Interacts (via SAM domain) with ANKS3 (via SAM domain). Hydroxylated at Asn-129, most probably by HIF1AN. This hydroxylation results in decreased NEK8-binding. As to expression, expressed in kidney (at protein level).

It is found in the cell projection. Its subcellular location is the cilium. The protein localises to the cytoplasm. Required for renal function. The protein is Ankyrin repeat and SAM domain-containing protein 6 (Anks6) of Mus musculus (Mouse).